The following is a 179-amino-acid chain: Interferon lambda-4 (179 aa).

The signal sequence occupies residues 1–21; the sequence is MRPSVWAAVAAGLWVLCTVIA. A disordered region spans residues 130 to 149; it reads SSRKVPGAQKRRHKPRRADS.

This sequence belongs to the lambda interferon family.

Its subcellular location is the cytoplasm. The protein localises to the secreted. In terms of biological role, cytokine that may trigger an antiviral response activating the JAK-STAT pathway and up-regulating specifically some interferon-stimulated genes. The polypeptide is Interferon lambda-4 (IFNL4) (Homo sapiens (Human)).